A 134-amino-acid polypeptide reads, in one-letter code: MKCSVLQMSRLSWTACVLLLPLLLLTLQGGVQGCFIRNCPRGGKRAVDSVQPTRQCMSCGPEGVGQCVGPSICCGLAIGCLMGTPEAEVCQKENESSAPCAVSGRHCGMDNTGNCVADGICCVEDACSFNSLCR.

The signal sequence occupies residues 1–33; it reads MKCSVLQMSRLSWTACVLLLPLLLLTLQGGVQG. Cys34 and Cys39 are oxidised to a cystine. A propeptide spanning residues 44-50 is cleaved from the precursor; sequence KRAVDSV. 7 disulfides stabilise this stretch: Cys56-Cys100, Cys59-Cys73, Cys67-Cys90, Cys74-Cys80, Cys107-Cys121, Cys115-Cys133, and Cys122-Cys127.

This sequence belongs to the vasopressin/oxytocin family. In terms of processing, contains 7 disulfide bonds. In terms of tissue distribution, expressed by the venom duct.

The protein localises to the secreted. The protein is Terepressin/terephysin of Terebra anilis (Auger snail).